A 292-amino-acid polypeptide reads, in one-letter code: Aquaporin-3 (292 aa).

Residues 1–24 are Cytoplasmic-facing; sequence MGRQKELMNRCGEMLHIRYRLLRQ. The helical transmembrane segment at 25-42 threads the bilayer; that stretch reads ALAECLGTLILVMFGCGS. The Extracellular portion of the chain corresponds to 43-56; the sequence is VAQVVLSRGTHGGF. The helical transmembrane segment at 57–74 threads the bilayer; that stretch reads LTINLAFGFAVTLAILVA. Residues 75-78 lie on the Cytoplasmic side of the membrane; it reads GQVS. The discontinuously helical intramembrane region spans 79–92; that stretch reads GAHLNPAVTFAMCF. The NPA 1 motif lies at 83–85; that stretch reads NPA. The Cytoplasmic segment spans residues 93 to 100; the sequence is LAREPWIK. Residues 101–121 traverse the membrane as a helical segment; that stretch reads LPIYTLAQTLGAFLGAGIVFG. The Extracellular portion of the chain corresponds to 122 to 159; it reads LYYDAIWAFAGNELVVSGPNGTAGIFATYPSGHLDMVN. An N-linked (GlcNAc...) asparagine glycan is attached at Asn141. Residues 160 to 177 traverse the membrane as a helical segment; it reads GFFDQFIGTAALIVCVLA. Topologically, residues 178–189 are cytoplasmic; the sequence is IVDPYNNPVPRG. Residues 190-206 form a helical membrane-spanning segment; the sequence is LEAFTVGLVVLVIGTSM. Residues 207 to 210 are Extracellular-facing; it reads GFNS. The discontinuously helical intramembrane region spans 211–224; the sequence is GYAVNPARDFGPRL. Positions 215–217 match the NPA 2 motif; it reads NPA. At 225–242 the chain is on the extracellular side; it reads FTALAGWGSEVFTTGQNW. The chain crosses the membrane as a helical span at residues 243–264; it reads WWVPIVSPLLGSIGGVFVYQLM. The Cytoplasmic portion of the chain corresponds to 265-292; the sequence is IGCHLEQPPPSTEAENVKLAHMKHKEQI.

Belongs to the MIP/aquaporin (TC 1.A.8) family. In terms of assembly, homotetramer; each monomer provides an independent glycerol/water pore. Could also exist in other oligomeric states. In terms of tissue distribution, detected in kidney medulla and papilla, in collecting duct cells. Detected in colon.

Its subcellular location is the cell membrane. It localises to the basolateral cell membrane. The enzyme catalyses glycerol(in) = glycerol(out). It catalyses the reaction H2O(in) = H2O(out). The catalysed reaction is urea(in) = urea(out). It carries out the reaction H2O2(out) = H2O2(in). With respect to regulation, channel activity is inhibited by mercury ions. Functionally, aquaglyceroporins form homotetrameric transmembrane channels, with each monomer independently mediating glycerol and water transport across the plasma membrane along their osmotic gradient. Could also be permeable to urea. Also participates in cell permeability to H2O2 and H2O2-mediated signaling. In skin, transports glycerol to the epidermis and stratum corneum, where it maintains hydration, elasticity, and supports lipid biosynthesis for barrier repair. In kidney, contributes to the reabsorption of water, helping the body maintain proper fluid balance. This is Aquaporin-3 from Rattus norvegicus (Rat).